The sequence spans 600 residues: NADH-quinone oxidoreductase subunit C/D (600 aa).

The NADH dehydrogenase I subunit C stretch occupies residues 1–190 (MVNNMTDLTA…SPFELTKAKQ (190 aa)). Residues 214 to 600 (DFMFLNLGPN…IDFVMSDVDR (387 aa)) form an NADH dehydrogenase I subunit D region.

The protein in the N-terminal section; belongs to the complex I 30 kDa subunit family. It in the C-terminal section; belongs to the complex I 49 kDa subunit family. In terms of assembly, NDH-1 is composed of 13 different subunits. Subunits NuoB, CD, E, F, and G constitute the peripheral sector of the complex.

Its subcellular location is the cell inner membrane. The enzyme catalyses a quinone + NADH + 5 H(+)(in) = a quinol + NAD(+) + 4 H(+)(out). In terms of biological role, NDH-1 shuttles electrons from NADH, via FMN and iron-sulfur (Fe-S) centers, to quinones in the respiratory chain. The immediate electron acceptor for the enzyme in this species is believed to be ubiquinone. Couples the redox reaction to proton translocation (for every two electrons transferred, four hydrogen ions are translocated across the cytoplasmic membrane), and thus conserves the redox energy in a proton gradient. The sequence is that of NADH-quinone oxidoreductase subunit C/D from Escherichia coli (strain K12 / DH10B).